The primary structure comprises 661 residues: Zeaxanthin epoxidase, chloroplastic (661 aa).

Residues methionine 1–serine 50 constitute a chloroplast transit peptide. FAD-binding positions include arginine 82 to glutamate 110 and isoleucine 360 to aspartate 373. In terms of domain architecture, FHA spans cysteine 558–isoleucine 607.

FAD is required as a cofactor.

The protein localises to the plastid. It is found in the chloroplast. It catalyses the reaction all-trans-zeaxanthin + 4 reduced [2Fe-2S]-[ferredoxin] + 2 O2 + 4 H(+) = all-trans-violaxanthin + 4 oxidized [2Fe-2S]-[ferredoxin] + 2 H2O. Its pathway is plant hormone biosynthesis; abscisate biosynthesis. Converts zeaxanthin into antheraxanthin and subsequently violaxanthin. Involved in the epoxidation of zeaxanthin. In Prunus armeniaca (Apricot), this protein is Zeaxanthin epoxidase, chloroplastic.